The following is a 313-amino-acid chain: Probable cell division protein WhiA (313 aa).

Positions 274–308 form a DNA-binding region, H-T-H motif; that stretch reads SLKELGELVPGGPISKSGVNHRLRKLNAYADELRA.

The protein belongs to the WhiA family.

In terms of biological role, involved in cell division and chromosome segregation. The protein is Probable cell division protein WhiA of Limosilactobacillus reuteri subsp. reuteri (strain JCM 1112) (Lactobacillus reuteri).